The following is a 417-amino-acid chain: Phosphoglycerate kinase 1 (417 aa).

Serine 2 carries the post-translational modification N-acetylserine. Residues serine 2 and serine 4 each carry the phosphoserine modification. Position 6 is an N6-succinyllysine (lysine 6). Lysine 11 bears the N6-acetyllysine mark. (2R)-3-phosphoglycerate-binding residues include valine 23, aspartate 24, phenylalanine 25, asparagine 26, glutamine 38, and arginine 39. The mitochondrial targeting region exposed following cis-trans isomerization by PIN1 and recognized by the TOM complex for mitochondrial translocation of the protein stretch occupies residues 38–43 (QRIKAA). Lysine 48 bears the N6-acetyllysine; alternate mark. An N6-succinyllysine; alternate modification is found at lysine 48. Residues serine 62, histidine 63, glycine 65, and arginine 66 each contribute to the (2R)-3-phosphoglycerate site. An N6-acetyllysine modification is found at lysine 75. At tyrosine 76 the chain carries Phosphotyrosine. 2 positions are modified to N6-acetyllysine: lysine 86 and lysine 91. Residue lysine 97 is modified to N6-acetyllysine; alternate. Lysine 97 is modified (N6-(2-hydroxyisobutyryl)lysine; alternate). Leucine 122 and arginine 123 together coordinate (2R)-3-phosphoglycerate. Lysine 131 is modified (N6-acetyllysine; alternate). Lysine 131 carries the post-translational modification N6-malonyllysine; alternate. Lysine 146 is subject to N6-acetyllysine. Residues histidine 170 and arginine 171 each contribute to the (2R)-3-phosphoglycerate site. Lysine 191 carries the N6-succinyllysine modification. Tyrosine 196 is subject to Phosphotyrosine. Residue lysine 199 is modified to N6-acetyllysine. Position 203 is a phosphoserine (serine 203). Glycine 214 provides a ligand contact to ADP. Glycine 214 provides a ligand contact to CDP. 2 residues coordinate AMP: alanine 215 and lysine 216. Alanine 215 lines the ATP pocket. A Mg(2+)-binding site is contributed by alanine 215. Lysine 216 is modified (N6-(2-hydroxyisobutyryl)lysine). Alanine 218 and aspartate 219 together coordinate Mg(2+). Aspartate 219 provides a ligand contact to CDP. Lysine 220 serves as a coordination point for AMP. Residue lysine 220 participates in ATP binding. An N6-(2-hydroxyisobutyryl)lysine modification is found at lysine 220. Residue glycine 238 participates in ADP binding. Position 238 (glycine 238) interacts with CDP. Glycine 239 contacts AMP. Residue glycine 239 participates in ATP binding. An N6-acetyllysine mark is found at lysine 267 and lysine 291. Glycine 313 is an AMP binding site. An ATP-binding site is contributed by glycine 313. Lysine 323 is modified (N6-(2-hydroxyisobutyryl)lysine). The CDP site is built by glycine 338, valine 340, and phenylalanine 343. Position 343 (phenylalanine 343) interacts with ADP. Glutamate 344 serves as a coordination point for AMP. Glutamate 344 serves as a coordination point for ATP. An N6-acetyllysine modification is found at lysine 361. Residues aspartate 375 and threonine 376 each coordinate ATP. A Mg(2+)-binding site is contributed by aspartate 375.

The protein belongs to the phosphoglycerate kinase family. In terms of assembly, monomer. Interacts with kinase MAPK1/ERK2; the interaction is direct, occurs under hypoxic conditions, and promotes its interaction with PIN1. Interacts with peptidyl-prolyl cis-trans isomerase PIN1; the interaction is direct, occurs under hypoxic conditions, and targets the protein to the mitochondrion by promoting interactions with the TOM complex. Interacts with mitochondrial circRNA mcPGK1 (via its 2nd stem-loop); the interaction is direct and targets the protein to the mitochondrion by promoting interactions with the TOM complex. Interacts with pyruvate dehydrogenase kinase PDK1; the interaction is direct, occurs under hypoxic conditions and leads to PDK1-mediated inhibition of pyruvate dehydrogenase complex activity. Mg(2+) is required as a cofactor. Post-translationally, phosphorylated at Ser-203 by MAPK1/ERK2 under hypoxic conditions, which promotes its mitochondrial targeting.

It localises to the cytoplasm. It is found in the cytosol. The protein resides in the mitochondrion matrix. The catalysed reaction is (2R)-3-phosphoglycerate + ATP = (2R)-3-phospho-glyceroyl phosphate + ADP. It carries out the reaction L-seryl-[protein] + ATP = O-phospho-L-seryl-[protein] + ADP + H(+). It functions in the pathway carbohydrate degradation; glycolysis; pyruvate from D-glyceraldehyde 3-phosphate: step 2/5. Functionally, catalyzes one of the two ATP producing reactions in the glycolytic pathway via the reversible conversion of 1,3-diphosphoglycerate to 3-phosphoglycerate. Both L- and D- forms of purine and pyrimidine nucleotides can be used as substrates, but the activity is much lower on pyrimidines. In addition to its role as a glycolytic enzyme, it seems that PGK-1 acts as a polymerase alpha cofactor protein (primer recognition protein). Acts as a protein kinase when localized to the mitochondrion where it phosphorylates pyruvate dehydrogenase kinase PDK1 to inhibit pyruvate dehydrogenase complex activity and suppress the formation of acetyl-coenzyme A from pyruvate, and consequently inhibit oxidative phosphorylation and promote glycolysis. May play a role in sperm motility. The polypeptide is Phosphoglycerate kinase 1 (PGK1) (Sus scrofa (Pig)).